The sequence spans 105 residues: Small ribosomal subunit protein uS10 (105 aa).

It belongs to the universal ribosomal protein uS10 family. In terms of assembly, part of the 30S ribosomal subunit.

Functionally, involved in the binding of tRNA to the ribosomes. The polypeptide is Small ribosomal subunit protein uS10 (Arthrospira platensis (Spirulina platensis)).